The following is a 643-amino-acid chain: MEKSSSCESLGSQPAAARPPSVDSLSSASTSHSENSVHTKSASVVSSDSISTSADNFSPDLRVLRESNKLAEMEEPPLLPGENIKDMAKDVTYICPFTGAVRGTLTVTNYRLYFKSMERDPPFVLDASLGVINRVEKIGGASSRGENSYGLETVCKDIRNLRFAHKPEGRTRRSIFENLMKYAFPVSNNLPLFAFEYKEVFPENGWKLYDPLLEYRRQGIPNESWRITKINERYELCDTYPALLVVPANIPDEELKRVASFRSRGRIPVLSWIHPESQATITRCSQPMVGVSGKRSKEDEKYLQAIMDSNAQSHEIFIFDARPSVNAVANKAKGGGYESEDAYQNAELVFLDIHNIHVMRESLRKLKEIVYPNIEETHWLSNLESTHWLEHIKLILAGALRIADKVESGKTSVIVHCSDGWDRTAQLTSLAMLMLDGYYRTTRGFEVLVEKEWLSFGHRFQLRVGHGDKNHADADRSPVFLQFIDCVWQMTRQFPTAFEFNEYFLITILDHLYSCLFGTFLCNSEQQRGKENLPKRTVSLWSYINSQLEDFTNPLYGSYSNHVLYPVASMRHLELWVGYYIRWNPRMKPQEPIHNRYKELLAKRAELQKKVEELQREISNRSTSSSERASSPAQCVTPVQTVV.

2 stretches are compositionally biased toward polar residues: residues 1-12 (MEKSSSCESLGS) and 23-40 (DSLS…VHTK). Residues 1–56 (MEKSSSCESLGSQPAAARPPSVDSLSSASTSHSENSVHTKSASVVSSDSISTSADN) are disordered. Phosphoserine occurs at positions 6 and 9. Over residues 41 to 55 (SASVVSSDSISTSAD) the composition is skewed to low complexity. A Phosphoserine modification is found at Ser58. A GRAM domain is found at 68-139 (NKLAEMEEPP…GVINRVEKIG (72 aa)). Positions 205–580 (GWKLYDPLLE…RHLELWVGYY (376 aa)) constitute a Myotubularin phosphatase domain. Positions 330, 355, and 356 each coordinate a 1,2-diacyl-sn-glycero-3-phospho-(1D-myo-inositol-3,5-bisphosphate). A 1,2-diacyl-sn-glycero-3-phospho-(1D-myo-inositol-3-phosphate) contacts are provided by Asn330, Asn355, and Ile356. Cys417 functions as the Phosphocysteine intermediate in the catalytic mechanism. A 1,2-diacyl-sn-glycero-3-phospho-(1D-myo-inositol-3,5-bisphosphate)-binding residues include Ser418, Asp419, Gly420, Trp421, Asp422, Arg423, Arg459, and Arg463. A 1,2-diacyl-sn-glycero-3-phospho-(1D-myo-inositol-3-phosphate) is bound by residues Ser418, Asp419, Gly420, Trp421, Asp422, and Arg423. Arg463 lines the a 1,2-diacyl-sn-glycero-3-phospho-(1D-myo-inositol-3-phosphate) pocket. A coiled-coil region spans residues 593–627 (IHNRYKELLAKRAELQKKVEELQREISNRSTSSSE). The interval 615–643 (QREISNRSTSSSERASSPAQCVTPVQTVV) is disordered. The span at 620-631 (NRSTSSSERASS) shows a compositional bias: low complexity. Over residues 632 to 643 (PAQCVTPVQTVV) the composition is skewed to polar residues.

This sequence belongs to the protein-tyrosine phosphatase family. Non-receptor class myotubularin subfamily. Homodimer (via coiled-coil domain). Heterotetramer consisting of one MTMR2 dimer and one SBF2/MTMR13 dimer; specifically in peripheral nerves stabilizes SBF2/MTMR13 at the membranes and increases MTMR2 catalytic activity towards phosphatidylinositol 3,5-bisphosphate and to a lesser extent towards phosphatidylinositol 3-phosphate. Heterodimer with SBF1/MTMR5; acts as an adapter for the phosphatase MTMR2 to regulate MTMR2 catalytic activity and subcellular location. Heterodimer with MTMR12. Post-translationally, phosphorylation at Ser-58 decreases MTMR2 localization to endocytic vesicular structures.

Its subcellular location is the cytoplasm. The protein resides in the early endosome membrane. It localises to the perinuclear region. The protein localises to the cell projection. It is found in the axon. Its subcellular location is the endosome membrane. It carries out the reaction a 1,2-diacyl-sn-glycero-3-phospho-(1D-myo-inositol-3,5-bisphosphate) + H2O = a 1,2-diacyl-sn-glycero-3-phospho-(1D-myo-inositol-5-phosphate) + phosphate. It catalyses the reaction a 1,2-diacyl-sn-glycero-3-phospho-(1D-myo-inositol-3-phosphate) + H2O = a 1,2-diacyl-sn-glycero-3-phospho-(1D-myo-inositol) + phosphate. The catalysed reaction is 1,2-dioctanoyl-sn-glycero-3-phospho-(1-D-myo-inositol-3-phosphate) + H2O = 1,2-dioctanoyl-sn-glycero-3-phospho-(1D-myo-inositol) + phosphate. The enzyme catalyses 1,2-dioctanoyl-sn-glycero-3-phospho-(1D-myo-inositol-3,5-bisphosphate) + H2O = 1,2-dioctanoyl-sn-glycero-3-phospho-(1D-myo-inositol-5-phosphate) + phosphate. Functionally, lipid phosphatase that specifically dephosphorylates the D-3 position of phosphatidylinositol 3-phosphate and phosphatidylinositol 3,5-bisphosphate, generating phosphatidylinositol and phosphatidylinositol 5-phosphate. Regulates the level of these phosphoinositides critical for various biological processes including autophagy initiation and autophagosome maturation. This chain is Phosphatidylinositol-3,5-bisphosphate 3-phosphatase MTMR2, found in Pongo abelii (Sumatran orangutan).